We begin with the raw amino-acid sequence, 291 residues long: Probable 2-(5''-triphosphoribosyl)-3'-dephosphocoenzyme-A synthase (291 aa).

It belongs to the CitG/MdcB family.

The enzyme catalyses 3'-dephospho-CoA + ATP = 2'-(5''-triphospho-alpha-D-ribosyl)-3'-dephospho-CoA + adenine. In terms of biological role, involved in the formation of 2-(5''-phosphoribosyl)-3'-dephosphocoenzyme-A, the prosthetic group of the acyl-carrier protein of the malonate decarboxylase. In Pseudomonas savastanoi pv. phaseolicola (strain 1448A / Race 6) (Pseudomonas syringae pv. phaseolicola (strain 1448A / Race 6)), this protein is Probable 2-(5''-triphosphoribosyl)-3'-dephosphocoenzyme-A synthase.